A 334-amino-acid polypeptide reads, in one-letter code: Phosphate acyltransferase (334 aa).

This sequence belongs to the PlsX family. In terms of assembly, homodimer. Probably interacts with PlsY.

The protein localises to the cytoplasm. It catalyses the reaction a fatty acyl-[ACP] + phosphate = an acyl phosphate + holo-[ACP]. The protein operates within lipid metabolism; phospholipid metabolism. In terms of biological role, catalyzes the reversible formation of acyl-phosphate (acyl-PO(4)) from acyl-[acyl-carrier-protein] (acyl-ACP). This enzyme utilizes acyl-ACP as fatty acyl donor, but not acyl-CoA. The sequence is that of Phosphate acyltransferase from Mycoplasma capricolum subsp. capricolum (strain California kid / ATCC 27343 / NCTC 10154).